We begin with the raw amino-acid sequence, 1530 residues long: MGTALVQHGGCCLLCLSLLLLGCWAELGSGLEFPGAEGQWTRFPKWNACCESEMSFQLKTRSARGLVLYFDDEGFCDFLELILTRGGRLQLSFSIFCAEPATLLADTPVNDGAWHSVRIRRQFRNTTLYIDRAEAKWVEVKSKRRDMTVFSGLFVGGLPPELRAAALKLTLASVREREPFKGWIRDVRVNSSQALPVDGSEVKLDEEPPNSGGGSPCEAGDEGDGGVCLNGGVCSVVDDQAVCDCSRTGFRGKDCSQEDNNVEGLAHLMMGDQGKSKEDNNVEGLAHLMMGDQGKEEYIATFKGSEYFCYDLSQNPIQSSSDEITLSFKTLQRNGLMLHTGKSADYVNLALKNGAVSLVINLGSGAFEALVEPVNGKFNDNAWHDVKVTRNLRQHSGIGHAMVNKLHCSVTISVDGILTTTGYTQEDYTMLGSDDFFYVGGSPSTADLPGSPVSNNFMGCLKEVVYKNNDVRLELSRLAKQGDPKMKIHGVVAFKCENVATLDPITFETPESFISLPKWNAKKTGSISFDFRTTEPNGLILFSHGKPRHQKDAKHPQMIKVDFFAIEMLDGHLYLLLDMGSGTIKIKALQKKVNDGEWYHVDFQRDGRSGTISVNTLRTPYTAPGESEILDLDDELYLGGLPENKAGLVFPTEVWTALLNYGYVGCIRDLFIDGQSKDIRQMAEIQSTAGVKPSCSRETAKPCLSNPCKNNGMCRDGWNRYVCDCSGTGYLGRSCEREATVLSYDGSMFMKIQLPVVMHTEAEDVSLRFRSQRAYGILMATTSRDSADTLRLELDAGRVKLTVNLDCIRINCNSSKGPETLFAGYNLNDNEWHTVRVVRRGKSLKLTVDDQQAMTGQMAGDHTRLEFHNIETGIITERRYLSSVPSNFIGHLQSLTFNGMAYIDLCKNGDIDYCELNARFGFRNIIADPVTFKTKSSYVALATLQAYTSMHLFFQFKTTSLDGLILYNSGDGNDFIVVELVKGYLHYVFDLGNGANLIKGSSNKPLNDNQWHNVMISRDTSNLHTVKIDTKITTQITAGARNLDLKSDLYIGGVAKETYKSLPKLVHAKEGFQGCLASVDLNGRLPDLISDALFCNGQIERGCEGPSTTCQEDSCSNQGVCLQQWDGFSCDCSMTSFSGPLCNDPGTTYIFSKGGGQITHKWPPNDRPSTRADRLAIGFSTVQKEAVLVRVDSSSGLGDYLELHIHQGKIGVKFNVGTDDIAIEESNAIINDGKYHVVRFTRSGGNATLQVDSWPVIERYPAGNNDNERLAIARQRIPYRLGRVVDEWLLDKGRQLTIFNSQATIIIGGKEQGQPFQGQLSGLYYNGLKVLNMAAENDANIAIVGNVRLVGEVPSSMTTESTATAMQSEMSTSIMETTTTLATSTARRGKPPTKEPISQTTDDILVASAECPSDDEDIDPCEPSSGGLANPTRVGGREPYPGSAEVIRESSSTTGMVVGIVAAAALCILILLYAMYKYRNRDEGSYHVDESRNYISNSAQSNGAVVKEKQPSSAKSANKNKKNKDKEYYV.

A signal peptide spans 1–30 (MGTALVQHGGCCLLCLSLLLLGCWAELGSG). In terms of domain architecture, Laminin G-like 1 spans 31–217 (LEFPGAEGQW…PPNSGGGSPC (187 aa)). Over 31–1454 (LEFPGAEGQW…EVIRESSSTT (1424 aa)) the chain is Extracellular. 2 N-linked (GlcNAc...) asparagine glycosylation sites follow: Asn125 and Asn190. The tract at residues 196–219 (PVDGSEVKLDEEPPNSGGGSPCEA) is disordered. The region spanning 213–255 (GGSPCEAGDEGDGGVCLNGGVCSVVDDQAVCDCSRTGFRGKDC) is the EGF-like 1 domain. Cystine bridges form between Cys228–Cys243 and Cys245–Cys255. Laminin G-like domains follow at residues 299–496 (IATF…AFKC) and 503–695 (DPIT…KPSC). Positions 345, 362, and 430 each coordinate Ca(2+). 5 disulfide bridges follow: Cys460/Cys496, Cys666/Cys695, Cys703/Cys714, Cys708/Cys723, and Cys725/Cys735. In terms of domain architecture, EGF-like 2 spans 699–736 (TAKPCLSNPCKNNGMCRDGWNRYVCDCSGTGYLGRSCE). Laminin G-like domains lie at 741-914 (VLSY…IDYC) and 928-1103 (DPVT…ERGC). Ca(2+) contacts are provided by Asp788 and Leu805. The N-linked (GlcNAc...) asparagine glycan is linked to Asn813. Arg864 is a binding site for Ca(2+). 5 disulfides stabilise this stretch: Cys906-Cys914, Cys1075-Cys1103, Cys1110-Cys1121, Cys1115-Cys1130, and Cys1132-Cys1142. In terms of domain architecture, EGF-like 3 spans 1106 to 1143 (PSTTCQEDSCSNQGVCLQQWDGFSCDCSMTSFSGPLCN). In terms of domain architecture, Laminin G-like 6 spans 1149-1347 (YIFSKGGGQI…DANIAIVGNV (199 aa)). Ca(2+) contacts are provided by Asp1199 and Val1216. Asn1246 is a glycosylation site (N-linked (GlcNAc...) asparagine). The Ca(2+) site is built by Ile1298 and Asn1300. A glycan (O-linked (Xyl...) (heparan sulfate) serine) is linked at Ser1408. Positions 1412–1443 (PSDDEDIDPCEPSSGGLANPTRVGGREPYPGS) are disordered. Residues 1455 to 1475 (GMVVGIVAAAALCILILLYAM) form a helical membrane-spanning segment. The Cytoplasmic segment spans residues 1476–1530 (YKYRNRDEGSYHVDESRNYISNSAQSNGAVVKEKQPSSAKSANKNKKNKDKEYYV). Residues 1497-1523 (NSAQSNGAVVKEKQPSSAKSANKNKKN) form an interaction with CASK region. Positions 1497–1530 (NSAQSNGAVVKEKQPSSAKSANKNKKNKDKEYYV) are disordered.

It belongs to the neurexin family. In terms of assembly, interacts (via laminin G-like domain 2 and/or laminin G-like domain 6) with NLGN1 forming a heterotetramer, where one NLGN1 dimer interacts with one NRXN1 dimer. Also interacts (via laminin G-like domain 2 and/or laminin G-like domain 6) with NLGN2, NLGN3 and NLGN4L; interactions with NLGN1, NLGN2, NLGN3 and NLGN4L are calcium-dependent. Interacts (via cytoplasmic C-terminal region) with CASK (via the PDZ, SH3 and guanylate kinase-like domains). Interacts (via cytoplasmic C-terminus) with CASKIN1 and APBA1. Interacts (via laminin G-like domain 2) with NXPH1 and NXPH3. Alpha-type isoforms (neurexin-1-alpha) interact (via laminin G-like domain 2 and/or laminin G-like domain 6) with DAG1 (via alpha-dystroglycan chain). Interacts with LRRTM1, LRRTM2, LRRTM3 and LRRTM4. Interacts with SYT13 and SYTL1. Interacts with CBLN1, CBLN2 and, less avidly, with CBLN4. Interacts with CLSTN3. Alpha-type isoforms interact with alpha-latrotoxin from spider venom. O-glycosylated; contains heparan sulfate. Heparan sulfate attachment is required for synapse development by mediating interactions with neuroligins and LRRTM2. In terms of tissue distribution, brain (neuronal synapse).

Its subcellular location is the presynaptic cell membrane. Cell surface protein involved in cell-cell-interactions, exocytosis of secretory granules and regulation of signal transmission. Function is isoform-specific. Alpha-type isoforms have a long N-terminus with six laminin G-like domains and play an important role in synaptic signal transmission. Alpha-type isoforms play a role in the regulation of calcium channel activity and Ca(2+)-triggered neurotransmitter release at synapses and at neuromuscular junctions. They play an important role in Ca(2+)-triggered exocytosis of secretory granules in pituitary gland. They may affect their functions at synapses and in endocrine cells via their interactions with proteins from the exocytotic machinery. Likewise, alpha-type isoforms play a role in regulating the activity of postsynaptic NMDA receptors, a subtype of glutamate-gated ion channels. Both alpha-type and beta-type isoforms may play a role in the formation or maintenance of synaptic junctions via their interactions (via the extracellular domains) with neuroligin family members, CBLN1 or CBLN2. In vitro, triggers the de novo formation of presynaptic structures. May be involved in specification of excitatory synapses. Alpha-type isoforms were first identified as receptors for alpha-latrotoxin from spider venom. The chain is Neurexin-1 (Nrxn1) from Rattus norvegicus (Rat).